A 116-amino-acid polypeptide reads, in one-letter code: uncharacterized protein (116 aa).

This is an uncharacterized protein from Archaeoglobus fulgidus (strain ATCC 49558 / DSM 4304 / JCM 9628 / NBRC 100126 / VC-16).